Reading from the N-terminus, the 143-residue chain is Large ribosomal subunit protein uL13 (143 aa).

Belongs to the universal ribosomal protein uL13 family. As to quaternary structure, part of the 50S ribosomal subunit.

Functionally, this protein is one of the early assembly proteins of the 50S ribosomal subunit, although it is not seen to bind rRNA by itself. It is important during the early stages of 50S assembly. This chain is Large ribosomal subunit protein uL13, found in Clostridioides difficile (strain 630) (Peptoclostridium difficile).